A 189-amino-acid polypeptide reads, in one-letter code: Ribulose bisphosphate carboxylase small subunit, chloroplastic (189 aa).

Residues 1–66 (MASSIMALSS…KTTSNGSRVR (66 aa)) constitute a chloroplast transit peptide.

This sequence belongs to the RuBisCO small chain family. As to quaternary structure, heterohexadecamer of 8 large and 8 small subunits.

The protein localises to the plastid. It localises to the chloroplast. Its function is as follows. RuBisCO catalyzes two reactions: the carboxylation of D-ribulose 1,5-bisphosphate, the primary event in carbon dioxide fixation, as well as the oxidative fragmentation of the pentose substrate. Both reactions occur simultaneously and in competition at the same active site. Although the small subunit is not catalytic it is essential for maximal activity. The chain is Ribulose bisphosphate carboxylase small subunit, chloroplastic from Larix laricina (Tamarack).